A 367-amino-acid polypeptide reads, in one-letter code: D-alanine--D-alanine ligase (367 aa).

The region spanning 148–357 (KMAFEQAGLP…FPELVDKLVQ (210 aa)) is the ATP-grasp domain. 184–239 (EASLGYPCFVKPANLGSSVGISKVRSRQELEDALDNAANYDRRIIVEAGVVAREVE) is an ATP binding site. Mg(2+) contacts are provided by D310, E324, and N326.

Belongs to the D-alanine--D-alanine ligase family. Mg(2+) serves as cofactor. Requires Mn(2+) as cofactor.

It localises to the cytoplasm. It carries out the reaction 2 D-alanine + ATP = D-alanyl-D-alanine + ADP + phosphate + H(+). The protein operates within cell wall biogenesis; peptidoglycan biosynthesis. Cell wall formation. The chain is D-alanine--D-alanine ligase from Trichormus variabilis (strain ATCC 29413 / PCC 7937) (Anabaena variabilis).